Here is a 194-residue protein sequence, read N- to C-terminus: Peptidyl-tRNA hydrolase (194 aa).

Y17 serves as a coordination point for tRNA. The active-site Proton acceptor is the H22. TRNA-binding residues include F68, N70, and N116.

The protein belongs to the PTH family. Monomer.

The protein localises to the cytoplasm. The enzyme catalyses an N-acyl-L-alpha-aminoacyl-tRNA + H2O = an N-acyl-L-amino acid + a tRNA + H(+). Hydrolyzes ribosome-free peptidyl-tRNAs (with 1 or more amino acids incorporated), which drop off the ribosome during protein synthesis, or as a result of ribosome stalling. In terms of biological role, catalyzes the release of premature peptidyl moieties from peptidyl-tRNA molecules trapped in stalled 50S ribosomal subunits, and thus maintains levels of free tRNAs and 50S ribosomes. The protein is Peptidyl-tRNA hydrolase of Shewanella halifaxensis (strain HAW-EB4).